The primary structure comprises 248 residues: Ribonuclease 3 (248 aa).

The RNase III domain maps to 6-136 (LAYLQTLIGS…LIGAIYLDKG (131 aa)). E49 contributes to the Mg(2+) binding site. D53 is an active-site residue. D122 and E125 together coordinate Mg(2+). The active site involves E125. One can recognise a DRBM domain in the interval 163 to 231 (NYKSCLIEYS…AKEAMERIIA (69 aa)).

This sequence belongs to the ribonuclease III family. In terms of assembly, homodimer. The cofactor is Mg(2+).

It is found in the cytoplasm. The enzyme catalyses Endonucleolytic cleavage to 5'-phosphomonoester.. Its function is as follows. Digests double-stranded RNA. Involved in the processing of primary rRNA transcript to yield the immediate precursors to the large and small rRNAs (23S and 16S). Processes some mRNAs, and tRNAs when they are encoded in the rRNA operon. Processes pre-crRNA and tracrRNA of type II CRISPR loci if present in the organism. This is Ribonuclease 3 from Chlorobium chlorochromatii (strain CaD3).